The sequence spans 257 residues: Methylthioribulose-1-phosphate dehydratase (257 aa).

Substrate is bound at residue Cys-107. 2 residues coordinate Zn(2+): His-125 and His-127. Glu-148 serves as the catalytic Proton donor/acceptor. His-210 is a Zn(2+) binding site.

This sequence belongs to the aldolase class II family. MtnB subfamily. Zn(2+) serves as cofactor.

It localises to the cytoplasm. The catalysed reaction is 5-(methylsulfanyl)-D-ribulose 1-phosphate = 5-methylsulfanyl-2,3-dioxopentyl phosphate + H2O. The protein operates within amino-acid biosynthesis; L-methionine biosynthesis via salvage pathway; L-methionine from S-methyl-5-thio-alpha-D-ribose 1-phosphate: step 2/6. Its function is as follows. Catalyzes the dehydration of methylthioribulose-1-phosphate (MTRu-1-P) into 2,3-diketo-5-methylthiopentyl-1-phosphate (DK-MTP-1-P). The sequence is that of Methylthioribulose-1-phosphate dehydratase from Lachancea thermotolerans (strain ATCC 56472 / CBS 6340 / NRRL Y-8284) (Yeast).